Consider the following 435-residue polypeptide: Glutamyl-tRNA reductase (435 aa).

Substrate-binding positions include 49-52 (TCNR), Ser109, 114-116 (ETQ), and Gln120. Cys50 serves as the catalytic Nucleophile. 189-194 (GAGEMS) contributes to the NADP(+) binding site.

Belongs to the glutamyl-tRNA reductase family. In terms of assembly, homodimer.

It carries out the reaction (S)-4-amino-5-oxopentanoate + tRNA(Glu) + NADP(+) = L-glutamyl-tRNA(Glu) + NADPH + H(+). The protein operates within porphyrin-containing compound metabolism; protoporphyrin-IX biosynthesis; 5-aminolevulinate from L-glutamyl-tRNA(Glu): step 1/2. Functionally, catalyzes the NADPH-dependent reduction of glutamyl-tRNA(Glu) to glutamate 1-semialdehyde (GSA). The chain is Glutamyl-tRNA reductase from Listeria monocytogenes serotype 4b (strain CLIP80459).